Reading from the N-terminus, the 317-residue chain is Ribosomal RNA small subunit methyltransferase H (317 aa).

Residues 39–41, Asp59, Phe83, Asp104, and Gln111 each bind S-adenosyl-L-methionine; that span reads GGH.

It belongs to the methyltransferase superfamily. RsmH family.

The protein localises to the cytoplasm. It carries out the reaction cytidine(1402) in 16S rRNA + S-adenosyl-L-methionine = N(4)-methylcytidine(1402) in 16S rRNA + S-adenosyl-L-homocysteine + H(+). Specifically methylates the N4 position of cytidine in position 1402 (C1402) of 16S rRNA. This Paraburkholderia phymatum (strain DSM 17167 / CIP 108236 / LMG 21445 / STM815) (Burkholderia phymatum) protein is Ribosomal RNA small subunit methyltransferase H.